A 283-amino-acid polypeptide reads, in one-letter code: TIMELESS-interacting protein (283 aa).

The interval 1-68 (MAMIDPLENN…SSSAARKAVK (68 aa)) is disordered. A compositionally biased stretch (acidic residues) spans 15–24 (PDYENTEDET). The segment at 74–150 (LDANRLVSER…KEVQTCLKRI (77 aa)) is interaction with TIMELESS. 2 disordered regions span residues 186–205 (GNVG…EQQQ) and 217–238 (RRQA…PSYP).

Belongs to the CSM3 family. In terms of assembly, interacts with TIMELESS, which impairs TIMELESS self-association.

It is found in the cytoplasm. Its subcellular location is the nucleus. In terms of biological role, plays an important role in the control of DNA replication and the maintenance of replication fork stability. Important for cell survival after DNA damage or replication stress. May be required for the replication checkpoint induced by hydroxyurea or ultraviolet light. The protein is TIMELESS-interacting protein (TIPIN) of Gallus gallus (Chicken).